The following is a 462-amino-acid chain: tRNA-2-methylthio-N(6)-dimethylallyladenosine synthase (462 aa).

The region spanning 28–144 is the MTTase N-terminal domain; the sequence is KKLFVKTYGC…LPKMMEAVNA (117 aa). [4Fe-4S] cluster contacts are provided by cysteine 37, cysteine 73, cysteine 107, cysteine 181, cysteine 185, and cysteine 188. Residues 167–398 enclose the Radical SAM core domain; sequence ATRGPTAFLT…QALLTQQQRA (232 aa). The 62-residue stretch at 401-462 folds into the TRAM domain; sequence DAMVGRRVKV…KTNSLTGRLV (62 aa).

The protein belongs to the methylthiotransferase family. MiaB subfamily. As to quaternary structure, monomer. Requires [4Fe-4S] cluster as cofactor.

Its subcellular location is the cytoplasm. The enzyme catalyses N(6)-dimethylallyladenosine(37) in tRNA + (sulfur carrier)-SH + AH2 + 2 S-adenosyl-L-methionine = 2-methylsulfanyl-N(6)-dimethylallyladenosine(37) in tRNA + (sulfur carrier)-H + 5'-deoxyadenosine + L-methionine + A + S-adenosyl-L-homocysteine + 2 H(+). Its function is as follows. Catalyzes the methylthiolation of N6-(dimethylallyl)adenosine (i(6)A), leading to the formation of 2-methylthio-N6-(dimethylallyl)adenosine (ms(2)i(6)A) at position 37 in tRNAs that read codons beginning with uridine. The chain is tRNA-2-methylthio-N(6)-dimethylallyladenosine synthase from Jannaschia sp. (strain CCS1).